Here is a 109-residue protein sequence, read N- to C-terminus: Nucleoid-associated protein VP2178 (109 aa).

Disordered stretches follow at residues 1-22 (MFGK…ERMQ) and 88-109 (QKEK…KMPF).

Belongs to the YbaB/EbfC family. As to quaternary structure, homodimer.

Its subcellular location is the cytoplasm. The protein resides in the nucleoid. Functionally, binds to DNA and alters its conformation. May be involved in regulation of gene expression, nucleoid organization and DNA protection. The protein is Nucleoid-associated protein VP2178 of Vibrio parahaemolyticus serotype O3:K6 (strain RIMD 2210633).